Consider the following 584-residue polypeptide: Pentatricopeptide repeat-containing protein At2g01510, mitochondrial (584 aa).

A mitochondrion-targeting transit peptide spans 1 to 20; it reads MLAKQTPLTKQMLSELLRAS. PPR repeat units lie at residues 73–107, 108–142, 143–173, 174–208, 209–243, 244–274, 275–309, 310–344, and 348–378; these read RIFL…GVRP, DEFT…GFGC, LGIV…MQVK, DLVA…AVQF, DSFT…EIDC, NIIV…MKQR, NVVS…GLRP, NYVT…NDKN, and RKEH…MPVE. The interval 383–458 is type E motif; sequence IWGALLGACA…VAAYSSVEFE (76 aa). The interval 459–489 is type E(+) motif; it reads GKIHFFNRGDKSHPQSKAIYEKLDEILKKIR. Positions 490 to 584 are type DYW motif; the sequence is KMGYVPDTCS…NGVCSCKEFW (95 aa).

Belongs to the PPR family. PCMP-H subfamily.

It is found in the mitochondrion. The polypeptide is Pentatricopeptide repeat-containing protein At2g01510, mitochondrial (PCMP-H37) (Arabidopsis thaliana (Mouse-ear cress)).